The sequence spans 508 residues: Fc receptor-like protein 2 (508 aa).

A signal peptide spans 1–19 (MLLWSLLVIFDAVTEQADS). Ig-like C2-type domains are found at residues 20 to 98 (LTLV…SNIV), 109 to 187 (PVLT…HRIR), 201 to 290 (PISN…KVVN), and 300 to 387 (PVLT…VSIS). Topologically, residues 20-401 (LTLVAPSSVF…YRRDLMTAGV (382 aa)) are extracellular. Cys-128 and Cys-177 are oxidised to a cystine. 5 N-linked (GlcNAc...) asparagine glycosylation sites follow: Asn-204, Asn-234, Asn-343, Asn-355, and Asn-365. 2 disulfides stabilise this stretch: Cys-226-Cys-275 and Cys-321-Cys-368. Residues 402–422 (LWGLFGVLGFTGVALLLYALF) form a helical membrane-spanning segment. Residues 423–508 (HKISGESSAT…QVIYSSVKKS (86 aa)) are Cytoplasmic-facing. Residues 429–453 (SSATNEPRGASRPNPQEFTYSSPTP) are disordered. A compositionally biased stretch (polar residues) spans 441–452 (PNPQEFTYSSPT). 4 short sequence motifs (ITIM motif) span residues 446-451 (FTYSSP), 460-465 (PVYVNV), 472-477 (VVYSQV), and 500-505 (VIYSSV).

In terms of assembly, the tyrosine-phosphorylated isoform 2 interacts with PTPN6. Isoform 2 is N- and O-glycosylated, and phosphorylated. In terms of tissue distribution, expressed in the secondary lymphoid organs, spleen and lymph node. Expression is limited to the mature B-cell lines. Highly expressed in CD19 and within the mantle zones of the tonsil tissue. Isoform 2 is expressed in the spleen, peripheral blood and bone marrow. Isoform 2 and isoform 4 are expressed in B-cell lines. Preferentially expressed in memory B-cells (at protein level).

It is found in the cell membrane. Its function is as follows. May have an regulatory role in normal and neoplastic B cell development. This is Fc receptor-like protein 2 (FCRL2) from Homo sapiens (Human).